A 137-amino-acid chain; its full sequence is GEL complex subunit OPTI (137 aa).

Residues 1–44 (MSGGRRKEEPPQPQLANGALKVSVWSKVLRSDAAWEDKDEFLDV) lie on the Cytoplasmic side of the membrane. A helical transmembrane segment spans residues 45-65 (IYWFRQIIAVVLGVIWGVLPL). Position 66 (arginine 66) is a topological domain, lumenal. A helical membrane pass occupies residues 67–84 (GFLGIAGFCLINAGVLYL). Residues 85–103 (YFSNYLQIDEEEYGGTWEL) are Cytoplasmic-facing. Residues 104–127 (TKEGFMTSFALFMVCVADSFTTGH) form a helical membrane-spanning segment. At 128 to 137 (LDHLLHCHPL) the chain is on the lumenal side.

The protein belongs to the EMC6 family. As to quaternary structure, component of the GET- and EMC-like (GEL) complex, composed of RAB5IF/OPTI and TMCO1. The GEL complex is part of the multi-pass translocon (MPT) complex, composed of three subcomplexes, the GEL complex (composed of RAB5IF/OPTI and TMCO1), the BOS complex (composed of NCLN/Nicalin, NOMO and TMEM147) and the PAT complex (composed of WDR83OS/Asterix and CCDC47). The MPT complex associates with the SEC61 complex. Interacts with NDUFS3, NDUFA4, NDUFV1, NDUFA9 and NDUFS8 of the mitochondrial membrane respiratory chain NADH dehydrogenase (Complex I). Interacts with UQCRC2 of the ubiquinol-cytochrome c reductase complex (Complex III). Interacts with COX5A and COX7C of the cytochrome c oxidase complex (Complex IV). Expressed in embryonic stem cells and differentiated neuronal cells.

It is found in the endoplasmic reticulum membrane. It localises to the mitochondrion inner membrane. Functionally, component of the multi-pass translocon (MPT) complex that mediates insertion of multi-pass membrane proteins into the lipid bilayer of membranes. The MPT complex takes over after the SEC61 complex: following membrane insertion of the first few transmembrane segments of proteins by the SEC61 complex, the MPT complex occludes the lateral gate of the SEC61 complex to promote insertion of subsequent transmembrane regions. Within the MPT complex, the GEL subcomplex may mediate insertion of transmembrane regions into the membrane. In addition to its role in multi-pass membrane insertion, RAB5IF/OPTI also acts as an assembly factor for mitochondrial respiratory complexes. This is GEL complex subunit OPTI from Homo sapiens (Human).